The sequence spans 167 residues: Regulatory protein RecX (167 aa).

Positions 19–49 (ESELRRKLASQPFSAKGHWGKQTGRSDNEPV) are disordered.

Belongs to the RecX family.

The protein localises to the cytoplasm. Its function is as follows. Modulates RecA activity. This is Regulatory protein RecX from Yersinia enterocolitica serotype O:8 / biotype 1B (strain NCTC 13174 / 8081).